The chain runs to 501 residues: ATP synthase subunit alpha (501 aa).

169 to 176 (GDRQTGKT) contributes to the ATP binding site.

It belongs to the ATPase alpha/beta chains family. As to quaternary structure, F-type ATPases have 2 components, CF(1) - the catalytic core - and CF(0) - the membrane proton channel. CF(1) has five subunits: alpha(3), beta(3), gamma(1), delta(1), epsilon(1). CF(0) has three main subunits: a(1), b(2) and c(9-12). The alpha and beta chains form an alternating ring which encloses part of the gamma chain. CF(1) is attached to CF(0) by a central stalk formed by the gamma and epsilon chains, while a peripheral stalk is formed by the delta and b chains.

It localises to the cell membrane. It carries out the reaction ATP + H2O + 4 H(+)(in) = ADP + phosphate + 5 H(+)(out). Its function is as follows. Produces ATP from ADP in the presence of a proton gradient across the membrane. The alpha chain is a regulatory subunit. This is ATP synthase subunit alpha from Streptococcus pneumoniae (strain Hungary19A-6).